We begin with the raw amino-acid sequence, 341 residues long: Paired box protein Pax-9 (341 aa).

The paired DNA-binding region spans 4-130; the sequence is AFGEVNQLGG…SSISRILRNK (127 aa). The tract at residues 7 to 63 is PAI subdomain; it reads EVNQLGGVFVNGRPLPNAIRLRIVELAQLGIRPCDISRQLRVSHGCVSKILARYNET. The tract at residues 82–130 is RED subdomain; that stretch reads TVVKHIRTYKQRDPGIFAWEIRDRLLADGVCDKYNVPSVSSISRILRNK. Residues 168–189 form an interaction with KDM5B region; sequence AAAAKVPTPPGVPAIPGSVAMP.

As to quaternary structure, interacts with KDM5B.

It is found in the nucleus. Transcription factor required for normal development of thymus, parathyroid glands, ultimobranchial bodies, teeth, skeletal elements of skull and larynx as well as distal limbs. This Propithecus coquereli (Coquerel's sifaka) protein is Paired box protein Pax-9 (PAX9).